A 492-amino-acid polypeptide reads, in one-letter code: NAD(P)H-quinone oxidoreductase subunit 2 A, chloroplastic (492 aa).

13 consecutive transmembrane segments (helical) span residues L6 to L26, I39 to F59, I81 to I101, M106 to C126, L131 to Y151, Y165 to G185, P209 to A229, W277 to I297, M305 to D325, Y336 to L356, A377 to F397, L400 to L420, and F464 to I484.

This sequence belongs to the complex I subunit 2 family. In terms of assembly, NDH is composed of at least 16 different subunits, 5 of which are encoded in the nucleus.

The protein localises to the plastid. It is found in the chloroplast thylakoid membrane. It carries out the reaction a plastoquinone + NADH + (n+1) H(+)(in) = a plastoquinol + NAD(+) + n H(+)(out). The enzyme catalyses a plastoquinone + NADPH + (n+1) H(+)(in) = a plastoquinol + NADP(+) + n H(+)(out). Functionally, NDH shuttles electrons from NAD(P)H:plastoquinone, via FMN and iron-sulfur (Fe-S) centers, to quinones in the photosynthetic chain and possibly in a chloroplast respiratory chain. The immediate electron acceptor for the enzyme in this species is believed to be plastoquinone. Couples the redox reaction to proton translocation, and thus conserves the redox energy in a proton gradient. The protein is NAD(P)H-quinone oxidoreductase subunit 2 A, chloroplastic of Phaseolus vulgaris (Kidney bean).